The following is a 675-amino-acid chain: DNA gyrase subunit B (675 aa).

One can recognise a Toprim domain in the interval 453 to 567 (SELYVVEGDS…NGHIFLAQPP (115 aa)). Mg(2+) is bound by residues Glu-459, Asp-532, and Asp-534.

Belongs to the type II topoisomerase GyrB family. Heterotetramer, composed of two GyrA and two GyrB chains. In the heterotetramer, GyrA contains the active site tyrosine that forms a transient covalent intermediate with DNA, while GyrB binds cofactors and catalyzes ATP hydrolysis. It depends on Mg(2+) as a cofactor. Mn(2+) is required as a cofactor. The cofactor is Ca(2+).

It is found in the cytoplasm. The enzyme catalyses ATP-dependent breakage, passage and rejoining of double-stranded DNA.. With respect to regulation, inhibited by 4-quinoline drugs (nalidixic acid, ciprofloxacin, ofloxacin), although it is much less sensitive than the corresponding enzyme from E.coli. GyrB intrinsic ATPase activity inhibited by aminopyrazinamide and pyrrolamide derivatives. Functionally, a type II topoisomerase that negatively supercoils closed circular double-stranded (ds) DNA in an ATP-dependent manner to modulate DNA topology and maintain chromosomes in an underwound state. Negative supercoiling favors strand separation, and DNA replication, transcription, recombination and repair, all of which involve strand separation. Also able to catalyze the interconversion of other topological isomers of dsDNA rings, including catenanes and knotted rings. Type II topoisomerases break and join 2 DNA strands simultaneously in an ATP-dependent manner. This chain is DNA gyrase subunit B, found in Mycolicibacterium smegmatis (strain ATCC 700084 / mc(2)155) (Mycobacterium smegmatis).